The sequence spans 172 residues: Adenine phosphoribosyltransferase (172 aa).

Belongs to the purine/pyrimidine phosphoribosyltransferase family. Homodimer.

The protein localises to the cytoplasm. The enzyme catalyses AMP + diphosphate = 5-phospho-alpha-D-ribose 1-diphosphate + adenine. It functions in the pathway purine metabolism; AMP biosynthesis via salvage pathway; AMP from adenine: step 1/1. Catalyzes a salvage reaction resulting in the formation of AMP, that is energically less costly than de novo synthesis. This chain is Adenine phosphoribosyltransferase, found in Streptococcus equi subsp. zooepidemicus (strain H70).